We begin with the raw amino-acid sequence, 128 residues long: Large ribosomal subunit protein uL22 (128 aa).

The tract at residues Met-1–Arg-20 is disordered. Residues Ile-9–Arg-20 show a composition bias toward basic and acidic residues.

The protein belongs to the universal ribosomal protein uL22 family. In terms of assembly, part of the 50S ribosomal subunit.

Functionally, this protein binds specifically to 23S rRNA; its binding is stimulated by other ribosomal proteins, e.g. L4, L17, and L20. It is important during the early stages of 50S assembly. It makes multiple contacts with different domains of the 23S rRNA in the assembled 50S subunit and ribosome. Its function is as follows. The globular domain of the protein is located near the polypeptide exit tunnel on the outside of the subunit, while an extended beta-hairpin is found that lines the wall of the exit tunnel in the center of the 70S ribosome. The chain is Large ribosomal subunit protein uL22 from Lachnospira eligens (strain ATCC 27750 / DSM 3376 / VPI C15-48 / C15-B4) (Eubacterium eligens).